Reading from the N-terminus, the 396-residue chain is Enoyl-[acyl-carrier-protein] reductase [NADH] (396 aa).

NAD(+)-binding positions include 48 to 53 (GASTGY), 74 to 75 (FE), 111 to 112 (DA), and 139 to 140 (LA). Y225 is a binding site for substrate. Y235 acts as the Proton donor in catalysis. Residues K244 and 273-275 (VVT) each bind NAD(+).

Belongs to the TER reductase family. As to quaternary structure, monomer.

It carries out the reaction a 2,3-saturated acyl-[ACP] + NAD(+) = a (2E)-enoyl-[ACP] + NADH + H(+). It participates in lipid metabolism; fatty acid biosynthesis. Involved in the final reduction of the elongation cycle of fatty acid synthesis (FAS II). Catalyzes the reduction of a carbon-carbon double bond in an enoyl moiety that is covalently linked to an acyl carrier protein (ACP). The polypeptide is Enoyl-[acyl-carrier-protein] reductase [NADH] (Colwellia psychrerythraea (strain 34H / ATCC BAA-681) (Vibrio psychroerythus)).